Consider the following 72-residue polypeptide: uncharacterized protein (72 aa).

The first 22 residues, 1 to 22 (MQSNFIFATLLVLLSLLTFTYA), serve as a signal peptide directing secretion. The Extracellular segment spans residues 23–28 (SGSSSM). Residues 29 to 49 (TSSSMPMFGGAIVAAFAFAIF) form a helical membrane-spanning segment. Topologically, residues 50-72 (SRLAQNFAPRAIFSLLPYHSVSC) are cytoplasmic.

It is found in the membrane. This is an uncharacterized protein from Dictyostelium discoideum (Social amoeba).